A 309-amino-acid polypeptide reads, in one-letter code: Acetolactate synthase small subunit, mitochondrial (309 aa).

The transit peptide at 1–24 (MLRSLLQSGHRRVVASSCATMVRC) directs the protein to the mitochondrion. Residues 79-159 (VLNCLVQNEP…DYTNSEIIKR (81 aa)) enclose the ACT domain.

The protein belongs to the acetolactate synthase small subunit family. As to quaternary structure, the acetolactate synthase complex contains the catalytic regulatory subunit ILV2 and the regulatory small subunit ILV6.

It is found in the mitochondrion. It participates in amino-acid biosynthesis; L-isoleucine biosynthesis; L-isoleucine from 2-oxobutanoate: step 1/4. The protein operates within amino-acid biosynthesis; L-valine biosynthesis; L-valine from pyruvate: step 1/4. Regulatory subunit of mitochondrial acetolactate synthase, which catalyzes the first of a series of common steps in the biosynthesis of the branched-chain amino acids. Stimulates activity of the acetolactate synthase catalytic subunit ILV2 seven- to tenfold and confers sensitivity to inhibition by valine and activation by ATP. The sequence is that of Acetolactate synthase small subunit, mitochondrial (ILV6) from Saccharomyces cerevisiae (strain ATCC 204508 / S288c) (Baker's yeast).